The sequence spans 231 residues: Small ribosomal subunit protein uS2 (231 aa).

Residues 1–23 (MKVTNLSEKEERGGELTEAEKEE) are disordered. The segment covering 7–23 (SEKEERGGELTEAEKEE) has biased composition (basic and acidic residues).

Belongs to the universal ribosomal protein uS2 family.

This Saccharolobus solfataricus (strain ATCC 35092 / DSM 1617 / JCM 11322 / P2) (Sulfolobus solfataricus) protein is Small ribosomal subunit protein uS2 (rps2).